Reading from the N-terminus, the 270-residue chain is Zinc transporter ZupT (270 aa).

Transmembrane regions (helical) follow at residues 8-28 (ILVVFLLTTLAGLATGIGGFI), 40-60 (LTFALGLSGGVMVYISLVELL), 78-98 (WIAIASFFGGIAVAALIDYLV), 131-151 (ILFALAIGIHNFPEGIATFAA), 162-182 (IALAVAVHNIPEGIAVAVPLY), 192-212 (LFYSFLSGLAEPVGAAIAMFF), 216-236 (FLTPTVLAVLFASVAGIMVFI), and 250-270 (HHHISIMGIIAGMLLMAIVLI). Fe(2+) contacts are provided by Asn-141 and Glu-144. Zn(2+) is bound by residues Glu-144 and His-169. Positions 170, 173, and 202 each coordinate Fe(2+). A Zn(2+)-binding site is contributed by Glu-173.

Belongs to the ZIP transporter (TC 2.A.5) family. ZupT subfamily.

It is found in the cell membrane. The enzyme catalyses Zn(2+)(in) = Zn(2+)(out). Functionally, mediates zinc uptake. May also transport other divalent cations. The polypeptide is Zinc transporter ZupT (Akkermansia muciniphila (strain ATCC BAA-835 / DSM 22959 / JCM 33894 / BCRC 81048 / CCUG 64013 / CIP 107961 / Muc)).